Here is a 223-residue protein sequence, read N- to C-terminus: Ribonuclease 3 (223 aa).

An RNase III domain is found at 3–125; the sequence is LEKLQKKLGH…LIAAIYLDAG (123 aa). Position 38 (Glu-38) interacts with Mg(2+). Asp-42 is an active-site residue. Positions 111 and 114 each coordinate Mg(2+). Residue Glu-114 is part of the active site. Residues 152–222 form the DRBM domain; sequence DPKTRLQEFL…AQQAIEKLKI (71 aa).

It belongs to the ribonuclease III family. As to quaternary structure, homodimer. The cofactor is Mg(2+).

Its subcellular location is the cytoplasm. The enzyme catalyses Endonucleolytic cleavage to 5'-phosphomonoester.. Its function is as follows. Digests double-stranded RNA. Involved in the processing of primary rRNA transcript to yield the immediate precursors to the large and small rRNAs (23S and 16S). Processes some mRNAs, and tRNAs when they are encoded in the rRNA operon. Processes pre-crRNA and tracrRNA of type II CRISPR loci if present in the organism. This chain is Ribonuclease 3, found in Histophilus somni (strain 2336) (Haemophilus somnus).